We begin with the raw amino-acid sequence, 444 residues long: 3-isopropylmalate dehydratase large subunit (444 aa).

Residues Xaa-348, Cys-408, and Xaa-411 each coordinate [4Fe-4S] cluster. Residues 423–444 (ERXXSHSNRNFEGRQGRGGRTH) form a disordered region.

This sequence belongs to the aconitase/IPM isomerase family. LeuC type 1 subfamily. As to quaternary structure, heterodimer of LeuC and LeuD. The cofactor is [4Fe-4S] cluster.

The catalysed reaction is (2R,3S)-3-isopropylmalate = (2S)-2-isopropylmalate. The protein operates within amino-acid biosynthesis; L-leucine biosynthesis; L-leucine from 3-methyl-2-oxobutanoate: step 2/4. Functionally, catalyzes the isomerization between 2-isopropylmalate and 3-isopropylmalate, via the formation of 2-isopropylmaleate. This is 3-isopropylmalate dehydratase large subunit from Buchnera aphidicola subsp. Uroleucon rudbeckiae.